Reading from the N-terminus, the 73-residue chain is Sec-independent protein translocase protein TatA (73 aa).

Residues 1-21 (MGSFSIWHWLIVLVIVMLVFG) traverse the membrane as a helical segment. The interval 50-73 (KEQIQQSSATAEKTVDVQAKDVNK) is disordered. The span at 62–73 (KTVDVQAKDVNK) shows a compositional bias: basic and acidic residues.

Belongs to the TatA/E family. As to quaternary structure, the Tat system comprises two distinct complexes: a TatABC complex, containing multiple copies of TatA, TatB and TatC subunits, and a separate TatA complex, containing only TatA subunits. Substrates initially bind to the TatABC complex, which probably triggers association of the separate TatA complex to form the active translocon.

The protein resides in the cell inner membrane. Part of the twin-arginine translocation (Tat) system that transports large folded proteins containing a characteristic twin-arginine motif in their signal peptide across membranes. TatA could form the protein-conducting channel of the Tat system. The sequence is that of Sec-independent protein translocase protein TatA from Polynucleobacter necessarius subsp. necessarius (strain STIR1).